The primary structure comprises 221 residues: uncharacterized protein (221 aa).

A run of 4 helical transmembrane segments spans residues F30–A50, A62–I82, V144–Y164, and I179–L199.

This sequence belongs to the DedA family.

The protein resides in the cell membrane. This is an uncharacterized protein from Bacillus subtilis (strain 168).